The sequence spans 64 residues: Probable tautomerase lp_1712 (64 aa).

The Proton acceptor; via imino nitrogen role is filled by Pro-2.

The protein belongs to the 4-oxalocrotonate tautomerase family.

The protein is Probable tautomerase lp_1712 of Lactiplantibacillus plantarum (strain ATCC BAA-793 / NCIMB 8826 / WCFS1) (Lactobacillus plantarum).